Consider the following 251-residue polypeptide: Triosephosphate isomerase (251 aa).

9–11 (NWK) lines the substrate pocket. His95 functions as the Electrophile in the catalytic mechanism. The active-site Proton acceptor is the Glu167. Substrate is bound by residues Gly173, Ser212, and 233–234 (GG).

The protein belongs to the triosephosphate isomerase family. As to quaternary structure, homodimer.

The protein resides in the cytoplasm. It carries out the reaction D-glyceraldehyde 3-phosphate = dihydroxyacetone phosphate. It participates in carbohydrate biosynthesis; gluconeogenesis. Its pathway is carbohydrate degradation; glycolysis; D-glyceraldehyde 3-phosphate from glycerone phosphate: step 1/1. Its function is as follows. Involved in the gluconeogenesis. Catalyzes stereospecifically the conversion of dihydroxyacetone phosphate (DHAP) to D-glyceraldehyde-3-phosphate (G3P). The protein is Triosephosphate isomerase of Pseudomonas aeruginosa (strain LESB58).